The following is a 98-amino-acid chain: R.appendiculatus Kunitz/BPTI-like protein (98 aa).

An N-terminal signal peptide occupies residues 1-23 (MASTLKLFMLLPVILLLLQEAYG). 4 cysteine pairs are disulfide-bonded: C36–C51, C43–C83, C49–C96, and C74–C92.

Monomer. As to expression, expressed in salivary glands.

The protein resides in the secreted. Functionally, activates large conductance calcium-activated potassium channels (maxiK, KCNMA1/KCNMB), when tested at micromolar concentrations, suggesting a potential mechanism for regulating host blood supply during feeding. Shows no antiprotease activity, and does not prevent ADP-, PAF- or collagen-induced platelet aggregation. Has no effect on blood coagulation and does not inhibit the alternative or classical complement cascades. The protein is R.appendiculatus Kunitz/BPTI-like protein of Rhipicephalus appendiculatus (Brown ear tick).